A 635-amino-acid chain; its full sequence is S-type anion channel SLAH3 (635 aa).

The Cytoplasmic portion of the chain corresponds to 1-253; it reads MEEKPNYVIQ…IVLPNDKKWP (253 aa). The span at 102-121 shows a compositional bias: polar residues; the sequence is SDPTTSLSSENHKNSGSTGK. Positions 102–173 are disordered; the sequence is SDPTTSLSSE…SGHHQNQNQA (72 aa). Basic residues predominate over residues 153 to 165; it reads NHHHHLHRQHQSG. Ser-189 is subject to Phosphoserine. Residues 193-217 form a disordered region; sequence ERQFTRKPASVEPEAPNRNNQNLNT. The helical transmembrane segment at 254 to 276 threads the bilayer; it reads FLLRYPISTFGMCLGVSSQAIMW. The Extracellular segment spans residues 277–299; that stretch reads KTLATAEPTKFLHVPLWINQGLW. Residues 300-320 traverse the membrane as a helical segment; that stretch reads FISVALILTIATIYLLKIILF. The Cytoplasmic segment spans residues 321–335; sequence FEAVRREYYHPIRIN. A helical membrane pass occupies residues 336 to 356; that stretch reads FFFAPFISLLFLALGVPPSII. At 357 to 358 the chain is on the extracellular side; that stretch reads TD. The chain crosses the membrane as a helical span at residues 359–379; that stretch reads LPHFLWYLLMFPFICLELKIY. Over 380–396 the chain is Cytoplasmic; it reads GQWMSGGQRRLSRVANP. A helical membrane pass occupies residues 397–417; it reads TNHLSVVGNFVGALLGASMGL. Residues 418-419 lie on the Extracellular side of the membrane; it reads RE. Residues 420–440 form a helical membrane-spanning segment; sequence GPIFFYAVGMAHYLVLFVTLY. The Cytoplasmic portion of the chain corresponds to 441 to 455; sequence QRLPTNETLPKDLHP. Residues 456–476 form a helical membrane-spanning segment; the sequence is VFFLFVAAPSVASMAWAKVTG. Position 477 (Ser-477) is a topological domain, extracellular. Residues 478–498 traverse the membrane as a helical segment; sequence FDYGSKVCYFIAIFLYFSLAV. Residues 499-504 lie on the Cytoplasmic side of the membrane; the sequence is RINFFR. Residues 505-525 traverse the membrane as a helical segment; sequence GIKFSLSWWAYTFPMTGAAIA. Over 526-541 the chain is Extracellular; it reads TIRYATVVKSTMTQIM. Residues 542–562 traverse the membrane as a helical segment; it reads CVVLCAIATLVVFALLVTTII. Residues 563 to 635 lie on the Cytoplasmic side of the membrane; it reads HAFVLRDLFP…NGKTQESDSS (73 aa). The tract at residues 611-635 is disordered; it reads FTDSDSSQSNDVEACNGKTQESDSS. Residues 614 to 635 are compositionally biased toward polar residues; the sequence is SDSSQSNDVEACNGKTQESDSS.

Belongs to the SLAC1 S-type anion channel family. Homotrimer. Interacts with KAT1. In terms of tissue distribution, expressed in the whole plant, escpecially in vascular systems.

Its subcellular location is the cell membrane. Its function is as follows. Slow, weak voltage-dependent S-type anion efflux channel involved in maintenance of anion homeostasis. Binds to the highly selective inward-rectifying potassium channel KAT1 and inhibits its activity. Functions as an essential negative regulator of inward potassium channels in guard cells. Essential for the efficient stomatal closure and opening in guard cells. The chain is S-type anion channel SLAH3 (SLAH3) from Arabidopsis thaliana (Mouse-ear cress).